A 145-amino-acid chain; its full sequence is 3-dehydroquinate dehydratase (145 aa).

Tyrosine 22 functions as the Proton acceptor in the catalytic mechanism. Residues asparagine 74, histidine 80, and aspartate 87 each contribute to the substrate site. Residue histidine 100 is the Proton donor of the active site. Residues 101 to 102 (IS) and arginine 111 contribute to the substrate site.

It belongs to the type-II 3-dehydroquinase family. In terms of assembly, homododecamer.

The enzyme catalyses 3-dehydroquinate = 3-dehydroshikimate + H2O. The protein operates within metabolic intermediate biosynthesis; chorismate biosynthesis; chorismate from D-erythrose 4-phosphate and phosphoenolpyruvate: step 3/7. In terms of biological role, catalyzes a trans-dehydration via an enolate intermediate. The chain is 3-dehydroquinate dehydratase from Lachnoclostridium phytofermentans (strain ATCC 700394 / DSM 18823 / ISDg) (Clostridium phytofermentans).